The primary structure comprises 54 residues: UPF0391 membrane protein Pfl01_0044 (54 aa).

Helical transmembrane passes span 4–24 (WAIT…GGIA) and 29–49 (GIAK…FFFG).

It belongs to the UPF0391 family.

The protein localises to the cell membrane. This Pseudomonas fluorescens (strain Pf0-1) protein is UPF0391 membrane protein Pfl01_0044.